A 201-amino-acid polypeptide reads, in one-letter code: LexA repressor (201 aa).

A DNA-binding region (H-T-H motif) is located at residues 28–48 (LREIAAKLGISGTLGVMKHLE). Residues Ser120 and Lys157 each act as for autocatalytic cleavage activity in the active site.

The protein belongs to the peptidase S24 family. As to quaternary structure, homodimer.

It catalyses the reaction Hydrolysis of Ala-|-Gly bond in repressor LexA.. Functionally, represses a number of genes involved in the response to DNA damage (SOS response), including recA and lexA. In the presence of single-stranded DNA, RecA interacts with LexA causing an autocatalytic cleavage which disrupts the DNA-binding part of LexA, leading to derepression of the SOS regulon and eventually DNA repair. This is LexA repressor from Geobacter sp. (strain M21).